The chain runs to 359 residues: Molybdenum import ATP-binding protein ModC (359 aa).

The ABC transporter domain occupies 1–229 (MLELNFSQQL…SALRPWLQRE (229 aa)). 31–38 (GLSGAGKT) serves as a coordination point for ATP. Residues 289-354 (SSSIRNILPV…IKSVSFNRQN (66 aa)) form the Mop domain.

The protein belongs to the ABC transporter superfamily. Molybdate importer (TC 3.A.1.8) family. The complex is composed of two ATP-binding proteins (ModC), two transmembrane proteins (ModB) and a solute-binding protein (ModA).

It localises to the cell inner membrane. The enzyme catalyses molybdate(out) + ATP + H2O = molybdate(in) + ADP + phosphate + H(+). Part of the ABC transporter complex ModABC involved in molybdenum import. Responsible for energy coupling to the transport system. The sequence is that of Molybdenum import ATP-binding protein ModC from Yersinia pestis bv. Antiqua (strain Antiqua).